Reading from the N-terminus, the 139-residue chain is Nucleoside diphosphate kinase (139 aa).

Residues Lys11, Phe59, Arg87, Thr93, Arg104, and Asn114 each contribute to the ATP site. The Pros-phosphohistidine intermediate role is filled by His117.

It belongs to the NDK family. In terms of assembly, homotetramer. The cofactor is Mg(2+).

Its subcellular location is the cytoplasm. It carries out the reaction a 2'-deoxyribonucleoside 5'-diphosphate + ATP = a 2'-deoxyribonucleoside 5'-triphosphate + ADP. The catalysed reaction is a ribonucleoside 5'-diphosphate + ATP = a ribonucleoside 5'-triphosphate + ADP. Functionally, major role in the synthesis of nucleoside triphosphates other than ATP. The ATP gamma phosphate is transferred to the NDP beta phosphate via a ping-pong mechanism, using a phosphorylated active-site intermediate. This is Nucleoside diphosphate kinase from Moorella thermoacetica (strain ATCC 39073 / JCM 9320).